A 573-amino-acid polypeptide reads, in one-letter code: 2-isopropylmalate synthase (573 aa).

A Pyruvate carboxyltransferase domain is found at 37 to 314; it reads PRWLSTDLRD…DPQIDFSNID (278 aa). Residues Asp-46, His-253, His-255, and Asn-289 each coordinate Mg(2+). The regulatory domain stretch occupies residues 456–573; it reads NPRNPWGRIQ…VVSAVNRAAR (118 aa).

Belongs to the alpha-IPM synthase/homocitrate synthase family. LeuA type 2 subfamily. As to quaternary structure, homodimer. Mg(2+) is required as a cofactor.

It localises to the cytoplasm. It catalyses the reaction 3-methyl-2-oxobutanoate + acetyl-CoA + H2O = (2S)-2-isopropylmalate + CoA + H(+). The protein operates within amino-acid biosynthesis; L-leucine biosynthesis; L-leucine from 3-methyl-2-oxobutanoate: step 1/4. Functionally, catalyzes the condensation of the acetyl group of acetyl-CoA with 3-methyl-2-oxobutanoate (2-ketoisovalerate) to form 3-carboxy-3-hydroxy-4-methylpentanoate (2-isopropylmalate). The chain is 2-isopropylmalate synthase from Streptomyces avermitilis (strain ATCC 31267 / DSM 46492 / JCM 5070 / NBRC 14893 / NCIMB 12804 / NRRL 8165 / MA-4680).